A 1154-amino-acid chain; its full sequence is Voltage-dependent calcium channel subunit alpha-2/delta-2 (1154 aa).

An N-terminal signal peptide occupies residues 1-18 (MAVPARTCGASWPGPVRT). The disordered stretch occupies residues 1–37 (MAVPARTCGASWPGPVRTARPWPGRGPRPCPDPRGPA). The Extracellular portion of the chain corresponds to 19–1116 (ARPWPGRGPR…TEDTSDCGRG (1098 aa)). A compositionally biased stretch (pro residues) spans 24 to 34 (GRGPRPCPDPR). N205 carries N-linked (GlcNAc...) asparagine glycosylation. Residues 294–472 (DMVIIVDVSG…INTQEYLDVL (179 aa)) form the VWFA domain. A divalent metal cation-binding residues include D300, S302, and S304. The MIDAS-like motif signature appears at 300–304 (DVSGS). N-linked (GlcNAc...) asparagine glycosylation is found at N389, N421, N510, N543, N627, and N864. C446 and C1101 are disulfide-bonded. The region spanning 488 to 577 (WTNVYEDALG…KPQTTNFREP (90 aa)) is the Cache domain. The chain crosses the membrane as a helical span at residues 1117–1137 (ASFPPSLGVLVSLQLLLLLGL). Residues 1138-1154 (PPRPQPQVHSFAASRHL) lie on the Cytoplasmic side of the membrane.

This sequence belongs to the calcium channel subunit alpha-2/delta family. In terms of assembly, dimer formed of alpha-2-2 and delta-2 chains; disulfide-linked. Voltage-dependent calcium channels are multisubunit complexes, consisting of alpha-1 (CACNA1), alpha-2 (CACNA2D), beta (CACNB) and delta (CACNA2D) subunits in a 1:1:1:1 ratio. In terms of processing, N-glycosylated. Post-translationally, may be proteolytically processed into subunits alpha-2-2 and delta-2 that are disulfide-linked. It is however unclear whether such cleavage really takes place in vivo and has a functional role. According to PubMed:11306709, it is processed, at least in vitro, while according to PubMed:17052222, it is only poorly processed in vivo. In terms of tissue distribution, predominantly expressed in brain in a restricted pattern. Also expressed at lower level in kidney and testis Not expressed in lung at any moment of development. In brain, it localizes to sections of P21 brain. Expressed at high level in the cerebellum, with moderate levels in medulla, pons, and striatum. Also expressed in cortex, hippocampus, habenula and nucleus reticularis thalami (nRT). Strongly expressed in cerebellar Purkinje cells.

The protein localises to the membrane. Its function is as follows. The alpha-2/delta subunit of voltage-dependent calcium channels regulates calcium current density and activation/inactivation kinetics of the calcium channel. Acts as a regulatory subunit for P/Q-type calcium channel (CACNA1A), N-type (CACNA1B), L-type (CACNA1C OR CACNA1D) and possibly T-type (CACNA1G). The polypeptide is Voltage-dependent calcium channel subunit alpha-2/delta-2 (Cacna2d2) (Mus musculus (Mouse)).